Here is a 179-residue protein sequence, read N- to C-terminus: MKVPEDLVLVGYISGAYGLNGWVRVRPYSADADALLTAKTWWLDKPEFHDVEMMQSKIHTGDVVAKLMGVAGRDAAEALKGATVQIPRSHFPALSDNEFYWVDLIGLEVENLQGEHLGQVSDMMDNGAHPILRVAVPQAAETTDPKAAPQELLIPFVEQFVITVDRTAKKITVDWGLDY.

In terms of domain architecture, PRC barrel spans 96-179; that stretch reads DNEFYWVDLI…KITVDWGLDY (84 aa).

Belongs to the RimM family. As to quaternary structure, binds ribosomal protein uS19.

The protein localises to the cytoplasm. In terms of biological role, an accessory protein needed during the final step in the assembly of 30S ribosomal subunit, possibly for assembly of the head region. Essential for efficient processing of 16S rRNA. May be needed both before and after RbfA during the maturation of 16S rRNA. It has affinity for free ribosomal 30S subunits but not for 70S ribosomes. In Janthinobacterium sp. (strain Marseille) (Minibacterium massiliensis), this protein is Ribosome maturation factor RimM.